We begin with the raw amino-acid sequence, 689 residues long: Glycine--tRNA ligase beta subunit (689 aa).

It belongs to the class-II aminoacyl-tRNA synthetase family. Tetramer of two alpha and two beta subunits.

The protein localises to the cytoplasm. The enzyme catalyses tRNA(Gly) + glycine + ATP = glycyl-tRNA(Gly) + AMP + diphosphate. The sequence is that of Glycine--tRNA ligase beta subunit from Pectobacterium atrosepticum (strain SCRI 1043 / ATCC BAA-672) (Erwinia carotovora subsp. atroseptica).